The sequence spans 70 residues: ATP synthase subunit c (70 aa).

2 consecutive transmembrane segments (helical) span residues 4-24 (IASA…NGLI) and 47-67 (FVGV…AFMV).

Belongs to the ATPase C chain family. In terms of assembly, F-type ATPases have 2 components, F(1) - the catalytic core - and F(0) - the membrane proton channel. F(1) has five subunits: alpha(3), beta(3), gamma(1), delta(1), epsilon(1). F(0) has three main subunits: a(1), b(2) and c(10-14). The alpha and beta chains form an alternating ring which encloses part of the gamma chain. F(1) is attached to F(0) by a central stalk formed by the gamma and epsilon chains, while a peripheral stalk is formed by the delta and b chains.

Its subcellular location is the cell membrane. F(1)F(0) ATP synthase produces ATP from ADP in the presence of a proton or sodium gradient. F-type ATPases consist of two structural domains, F(1) containing the extramembraneous catalytic core and F(0) containing the membrane proton channel, linked together by a central stalk and a peripheral stalk. During catalysis, ATP synthesis in the catalytic domain of F(1) is coupled via a rotary mechanism of the central stalk subunits to proton translocation. Functionally, key component of the F(0) channel; it plays a direct role in translocation across the membrane. A homomeric c-ring of between 10-14 subunits forms the central stalk rotor element with the F(1) delta and epsilon subunits. The sequence is that of ATP synthase subunit c from Priestia megaterium (strain ATCC 12872 / QMB1551) (Bacillus megaterium).